We begin with the raw amino-acid sequence, 274 residues long: uncharacterized protein (274 aa).

The segment at 253 to 274 is disordered; it reads QTGDVRTTEGTALTDDTTKRNI.

This is an uncharacterized protein from Deinococcus radiodurans (strain ATCC 13939 / DSM 20539 / JCM 16871 / CCUG 27074 / LMG 4051 / NBRC 15346 / NCIMB 9279 / VKM B-1422 / R1).